The sequence spans 127 residues: Large ribosomal subunit protein bL17 (127 aa).

This sequence belongs to the bacterial ribosomal protein bL17 family. In terms of assembly, part of the 50S ribosomal subunit. Contacts protein L32.

The chain is Large ribosomal subunit protein bL17 from Enterococcus faecalis (strain ATCC 700802 / V583).